A 190-amino-acid polypeptide reads, in one-letter code: Probable nicotinate-nucleotide adenylyltransferase (190 aa).

It belongs to the NadD family.

The enzyme catalyses nicotinate beta-D-ribonucleotide + ATP + H(+) = deamido-NAD(+) + diphosphate. It participates in cofactor biosynthesis; NAD(+) biosynthesis; deamido-NAD(+) from nicotinate D-ribonucleotide: step 1/1. Functionally, catalyzes the reversible adenylation of nicotinate mononucleotide (NaMN) to nicotinic acid adenine dinucleotide (NaAD). The polypeptide is Probable nicotinate-nucleotide adenylyltransferase (Borrelia hermsii (strain HS1 / DAH)).